The primary structure comprises 31 residues: Glucagon-3 (31 aa).

It belongs to the glucagon family.

It is found in the secreted. Functionally, glucagon plays a key role in glucose metabolism and homeostasis. Regulates blood glucose by increasing gluconeogenesis and decreasing glycolysis. The chain is Glucagon-3 from Huso dauricus (Kaluga sturgeon).